The primary structure comprises 970 residues: UvrABC system protein A (970 aa).

Position 34-41 (34-41) interacts with ATP; that stretch reads GVSGSGKS. A C4-type zinc finger spans residues 284-311; it reads CPEHGAVMDELSPRLFSFNSPYGACPDC. ABC transporter domains lie at 340–617 and 637–965; these read WSEK…QRSL and GNGA…KYLA. ATP is bound at residue 669 to 676; sequence GVSGSGKS. The C4-type zinc finger occupies 768 to 794; sequence CEACAGQGVNVIEMNFLPDVYVQCDVC.

It belongs to the ABC transporter superfamily. UvrA family. Forms a heterotetramer with UvrB during the search for lesions.

The protein localises to the cytoplasm. Its function is as follows. The UvrABC repair system catalyzes the recognition and processing of DNA lesions. UvrA is an ATPase and a DNA-binding protein. A damage recognition complex composed of 2 UvrA and 2 UvrB subunits scans DNA for abnormalities. When the presence of a lesion has been verified by UvrB, the UvrA molecules dissociate. This is UvrABC system protein A from Synechocystis sp. (strain ATCC 27184 / PCC 6803 / Kazusa).